The primary structure comprises 2254 residues: Acetyl-CoA carboxylase 1 (2254 aa).

In terms of domain architecture, Biotin carboxylation spans 36 to 543; the sequence is PIHSILIANN…HTGWLDSRIA (508 aa). The ATP-grasp domain maps to 189 to 381; sequence NSNLVTIPEE…LPAAQVAVGM (193 aa). Residue 215–272 participates in ATP binding; the sequence is CQVVGYPAMIKASWGGGGKGIRKVHNDDEVRALFKQVQGEVPGSPIFIMKVASQSRHL. 3 residues coordinate Mg(2+): Glu-338, Glu-352, and Asn-354. Residues Glu-338, Glu-352, and Asn-354 each coordinate Mn(2+). Residue Arg-356 is part of the active site. The Biotinyl-binding domain occupies 670 to 744; the sequence is LQNDHDPSKL…QAGELIANLD (75 aa). Position 711 is an N6-biotinyllysine (Lys-711). Phosphothreonine is present on Thr-1031. A Phosphoserine modification is found at Ser-1192. Positions 1492-1831 constitute a CoA carboxyltransferase N-terminal domain; sequence QYKPLGYLDR…YVGGPLPVLA (340 aa). The tract at residues 1492–2150 is carboxyltransferase; that stretch reads QYKPLGYLDR…ESSLVKNVRE (659 aa). Positions 1740, 2041, and 2043 each coordinate CoA. The region spanning 1835–2150 is the CoA carboxyltransferase C-terminal domain; that stretch reads PPERIVEYVP…ESSLVKNVRE (316 aa).

In terms of assembly, homodimer. The cofactor is biotin. Mg(2+) is required as a cofactor. Mn(2+) serves as cofactor. As to expression, expressed in roots, trichomes, epidermal leaf cells, siliques, petals, anthers, and seeds.

It localises to the cytoplasm. The protein resides in the cytosol. The enzyme catalyses hydrogencarbonate + acetyl-CoA + ATP = malonyl-CoA + ADP + phosphate + H(+). The catalysed reaction is N(6)-biotinyl-L-lysyl-[protein] + hydrogencarbonate + ATP = N(6)-carboxybiotinyl-L-lysyl-[protein] + ADP + phosphate + H(+). It participates in lipid metabolism; malonyl-CoA biosynthesis; malonyl-CoA from acetyl-CoA: step 1/1. Multifunctional enzyme that catalyzes the carboxylation of acetyl-CoA, forming malonyl-CoA, which is used in the plastid for fatty acid synthesis and in the cytosol in various biosynthetic pathways including fatty acid elongation. Required for very long chain fatty acids elongation. Necessary for embryo and plant development. Plays a central function in embryo morphogenesis, especially in apical meristem development. Involved in cell proliferation and tissue patterning. May act as a repressor of cytokinin response. In Arabidopsis thaliana (Mouse-ear cress), this protein is Acetyl-CoA carboxylase 1 (ACC1).